We begin with the raw amino-acid sequence, 441 residues long: Dolichyl-diphosphooligosaccharide--protein glycosyltransferase 48 kDa subunit (441 aa).

A signal peptide spans 1–28 (MKMVPRLAVRAWPLCGLLLAALGCVCAS). Topologically, residues 29-412 (GPRTLVLLDN…YERFIPSAYP (384 aa)) are lumenal. The helical transmembrane segment at 413 to 432 (YYASAFSMMAGLFLFSVVFL) threads the bilayer. Topologically, residues 433 to 441 (HMKEKEKSD) are cytoplasmic.

Belongs to the DDOST 48 kDa subunit family. As to quaternary structure, component of the oligosaccharyltransferase (OST) complex. OST exists in two different complex forms which contain common core subunits RPN1, RPN2, OST48, OST4, DAD1 and TMEM258, either STT3A or STT3B as catalytic subunits, and form-specific accessory subunits. STT3A complex assembly occurs through the formation of 3 subcomplexes. Subcomplex 1 contains RPN1 and TMEM258, subcomplex 2 contains the STT3A-specific subunits STT3A, DC2/OSTC, and KCP2 as well as the core subunit OST4, and subcomplex 3 contains RPN2, DAD1, and OST48. The STT3A complex can form stable complexes with the Sec61 complex or with both the Sec61 and TRAP complexes. Interacts with SMIM22.

The protein localises to the endoplasmic reticulum membrane. Its pathway is protein modification; protein glycosylation. Its function is as follows. Subunit of the oligosaccharyl transferase (OST) complex that catalyzes the initial transfer of a defined glycan (Glc(3)Man(9)GlcNAc(2) in eukaryotes) from the lipid carrier dolichol-pyrophosphate to an asparagine residue within an Asn-X-Ser/Thr consensus motif in nascent polypeptide chains, the first step in protein N-glycosylation. N-glycosylation occurs cotranslationally and the complex associates with the Sec61 complex at the channel-forming translocon complex that mediates protein translocation across the endoplasmic reticulum (ER). All subunits are required for a maximal enzyme activity. Required for the assembly of both SST3A- and SS3B-containing OST complexes. This is Dolichyl-diphosphooligosaccharide--protein glycosyltransferase 48 kDa subunit from Rattus norvegicus (Rat).